A 623-amino-acid polypeptide reads, in one-letter code: Glutathione import ATP-binding protein GsiA (623 aa).

ABC transporter domains lie at 15–269 (VSGL…QTLL) and 325–564 (LRSG…RKLM). Residues 49–56 (GESGSGKS) and 357–364 (GESGSGKS) each bind ATP.

Belongs to the ABC transporter superfamily. Glutathione importer (TC 3.A.1.5.11) family. In terms of assembly, the complex is composed of two ATP-binding proteins (GsiA), two transmembrane proteins (GsiC and GsiD) and a solute-binding protein (GsiB).

It is found in the cell inner membrane. The enzyme catalyses glutathione(out) + ATP + H2O = glutathione(in) + ADP + phosphate + H(+). Its function is as follows. Part of the ABC transporter complex GsiABCD involved in glutathione import. Responsible for energy coupling to the transport system. The protein is Glutathione import ATP-binding protein GsiA of Salmonella typhimurium (strain LT2 / SGSC1412 / ATCC 700720).